The following is a 935-amino-acid chain: Protein translocase subunit SecA (935 aa).

ATP is bound by residues Gln-90, 108–112 (GEGKT), and Asp-504.

This sequence belongs to the SecA family. Monomer and homodimer. Part of the essential Sec protein translocation apparatus which comprises SecA, SecYEG and auxiliary proteins SecDF. Other proteins may also be involved.

The protein localises to the cell inner membrane. The protein resides in the cellular thylakoid membrane. It localises to the cytoplasm. The enzyme catalyses ATP + H2O + cellular proteinSide 1 = ADP + phosphate + cellular proteinSide 2.. Functionally, part of the Sec protein translocase complex. Interacts with the SecYEG preprotein conducting channel. Has a central role in coupling the hydrolysis of ATP to the transfer of proteins into and across the cell membrane, serving as an ATP-driven molecular motor driving the stepwise translocation of polypeptide chains across the membrane. Its function is as follows. Probably participates in protein translocation into and across both the cytoplasmic and thylakoid membranes in cyanobacterial cells. This chain is Protein translocase subunit SecA, found in Gloeothece citriformis (strain PCC 7424) (Cyanothece sp. (strain PCC 7424)).